The primary structure comprises 91 residues: Small ribosomal subunit protein uS19 (91 aa).

This sequence belongs to the universal ribosomal protein uS19 family.

Protein S19 forms a complex with S13 that binds strongly to the 16S ribosomal RNA. This Janthinobacterium sp. (strain Marseille) (Minibacterium massiliensis) protein is Small ribosomal subunit protein uS19.